The following is a 377-amino-acid chain: Dual-specificity RNA methyltransferase RlmN (377 aa).

The Proton acceptor role is filled by Glu102. The 238-residue stretch at 108–345 folds into the Radical SAM core domain; that stretch reads EPDRRTLCVS…AVVRKNRGGD (238 aa). A disulfide bridge links Cys115 with Cys350. Residues Cys122, Cys126, and Cys129 each coordinate [4Fe-4S] cluster. S-adenosyl-L-methionine contacts are provided by residues 177–178, Ser209, 231–233, and Asn307; these read GE and SLN. Cys350 acts as the S-methylcysteine intermediate in catalysis. The disordered stretch occupies residues 354 to 377; that stretch reads AAEGGPGDPRRPAPPPLTRLPAAG.

Belongs to the radical SAM superfamily. RlmN family. [4Fe-4S] cluster serves as cofactor.

Its subcellular location is the cytoplasm. The catalysed reaction is adenosine(2503) in 23S rRNA + 2 reduced [2Fe-2S]-[ferredoxin] + 2 S-adenosyl-L-methionine = 2-methyladenosine(2503) in 23S rRNA + 5'-deoxyadenosine + L-methionine + 2 oxidized [2Fe-2S]-[ferredoxin] + S-adenosyl-L-homocysteine. The enzyme catalyses adenosine(37) in tRNA + 2 reduced [2Fe-2S]-[ferredoxin] + 2 S-adenosyl-L-methionine = 2-methyladenosine(37) in tRNA + 5'-deoxyadenosine + L-methionine + 2 oxidized [2Fe-2S]-[ferredoxin] + S-adenosyl-L-homocysteine. Specifically methylates position 2 of adenine 2503 in 23S rRNA and position 2 of adenine 37 in tRNAs. m2A2503 modification seems to play a crucial role in the proofreading step occurring at the peptidyl transferase center and thus would serve to optimize ribosomal fidelity. In Anaeromyxobacter sp. (strain Fw109-5), this protein is Dual-specificity RNA methyltransferase RlmN.